A 703-amino-acid chain; its full sequence is tRNA 5-methylaminomethyl-2-thiouridine biosynthesis bifunctional protein MnmC (703 aa).

The tRNA (mnm(5)s(2)U34)-methyltransferase stretch occupies residues 1 to 281; it reads MTAKPQKSCQ…KPAALVAKDH (281 aa). Positions 286-703 are FAD-dependent cmnm(5)s(2)U34 oxidoreductase; the sequence is VGGGLASANL…LRKLLKGKAL (418 aa).

In the N-terminal section; belongs to the methyltransferase superfamily. tRNA (mnm(5)s(2)U34)-methyltransferase family. It in the C-terminal section; belongs to the DAO family. The cofactor is FAD.

Its subcellular location is the cytoplasm. The catalysed reaction is 5-aminomethyl-2-thiouridine(34) in tRNA + S-adenosyl-L-methionine = 5-methylaminomethyl-2-thiouridine(34) in tRNA + S-adenosyl-L-homocysteine + H(+). In terms of biological role, catalyzes the last two steps in the biosynthesis of 5-methylaminomethyl-2-thiouridine (mnm(5)s(2)U) at the wobble position (U34) in tRNA. Catalyzes the FAD-dependent demodification of cmnm(5)s(2)U34 to nm(5)s(2)U34, followed by the transfer of a methyl group from S-adenosyl-L-methionine to nm(5)s(2)U34, to form mnm(5)s(2)U34. This Shewanella sp. (strain MR-7) protein is tRNA 5-methylaminomethyl-2-thiouridine biosynthesis bifunctional protein MnmC.